The sequence spans 478 residues: Spindle defective protein 3 (478 aa).

The Cytoplasmic portion of the chain corresponds to 1-24 (MDQMTVEEKILEHQELEDGSSSFR). Residues 25 to 45 (WLVSSTVIAIGGATVALYISG) traverse the membrane as a helical segment. At 46–52 (KIDWKIP) the chain is on the extracellular side. Residues 53 to 73 (AIEAGLALTAGGTITCGYLWF) form a helical membrane-spanning segment. Over 74–478 (KKRVKTVRKL…LRRVDDDIIE (405 aa)) the chain is Cytoplasmic.

The protein resides in the mitochondrion. It localises to the mitochondrion outer membrane. In the first mitotic division in embryos, required for mitotic spindle alignment and asymmetric cell division. Required for motor-driven chromosome movement and homolog searching within the nucleus, and subsequently ensures homologous chromosome pairing during the prophase stage of meiosis. In Caenorhabditis elegans, this protein is Spindle defective protein 3.